Here is a 682-residue protein sequence, read N- to C-terminus: Methionine--tRNA ligase (682 aa).

The 'HIGH' region signature appears at 12-22; the sequence is PYANGAIHLGH. Residues cysteine 143, cysteine 146, cysteine 156, and cysteine 159 each contribute to the Zn(2+) site. The 'KMSKS' region signature appears at 328–332; that stretch reads KMSKS. Lysine 331 contacts ATP. Residues 580–682 enclose the tRNA-binding domain; the sequence is DFAKLDLRVA…EGIRPGMQVK (103 aa).

This sequence belongs to the class-I aminoacyl-tRNA synthetase family. MetG type 1 subfamily. Homodimer. The cofactor is Zn(2+).

The protein resides in the cytoplasm. It carries out the reaction tRNA(Met) + L-methionine + ATP = L-methionyl-tRNA(Met) + AMP + diphosphate. Functionally, is required not only for elongation of protein synthesis but also for the initiation of all mRNA translation through initiator tRNA(fMet) aminoacylation. This Actinobacillus pleuropneumoniae serotype 7 (strain AP76) protein is Methionine--tRNA ligase.